The primary structure comprises 784 residues: DNA repair and recombination protein RAD54-like (784 aa).

A disordered region spans residues 1 to 54; that stretch reads MRRSLAPSQRGPMRPESRHSFTPPLLKKNKRSCQQELEREQELDRKRQSALRDA. Positions 2–9 are required for chromatin remodeling, strand pairing activities and coupling of ATPase activity; the sequence is RRSLAPSQ. Serine 20 bears the Phosphoserine mark. Phosphothreonine is present on threonine 22. Over residues 36-47 the composition is skewed to basic and acidic residues; sequence ELEREQELDRKR. In terms of domain architecture, Helicase ATP-binding spans 172–346; sequence EGKRGNFNGC…YSLVNFVNPE (175 aa). 185–192 is an ATP binding site; sequence DEMGLGKT. Residues 297–300 carry the DEGH box motif; the sequence is DEGH. The region spanning 503–660 is the Helicase C-terminal domain; it reads LLDFMLAAIR…NNESAEKHFT (158 aa). The tract at residues 751-784 is disordered; the sequence is EEAASEQPEEKPDRRKRPSTPPSDDSADEDFLGF. A compositionally biased stretch (acidic residues) spans 775–784; the sequence is DSADEDFLGF.

It belongs to the SNF2/RAD54 helicase family. In terms of assembly, interacts (via N-terminus) with spn-A/Rad51.

It localises to the nucleus. In terms of biological role, involved in mitotic DNA repair and meiotic recombination. Functions in the recombinational DNA repair pathway. Essential for interhomolog gene conversion (GC), but may have a less important role in intersister GC than spn-A/Rad51. In the presence of DNA, spn-A/Rad51 enhances the ATPase activity of okr/Rad54. The polypeptide is DNA repair and recombination protein RAD54-like (Drosophila yakuba (Fruit fly)).